We begin with the raw amino-acid sequence, 437 residues long: UDP-glucuronate 4-epimerase 4 (437 aa).

Residues 30–50 (SLTKFAFFSFFLLCLISLLFL) form a helical membrane-spanning segment. Residues 56 to 76 (INPSSPSDPSRRSLRTNTYGG) form a disordered region. Residues 96–116 (GITVLVTGAAGFVGTHVSAAL) traverse the membrane as a helical segment. 98–129 (TVLVTGAAGFVGTHVSAALKRRGDGVIGLDNF) is an NAD(+) binding site. Tyr-248 acts as the Proton acceptor in catalysis.

Belongs to the NAD(P)-dependent epimerase/dehydratase family. In terms of assembly, homodimer. In roots, leaves, siliques, flowers, pollen and stems.

The protein localises to the golgi apparatus. Its subcellular location is the golgi stack membrane. It carries out the reaction UDP-alpha-D-glucuronate = UDP-alpha-D-galacturonate. Its activity is regulated as follows. Activated by glycerol, not effected by dimethyl sulfoxide and inhibited by high concentration of monovalent salts, UDP-xylose, UDP-arabinose or UDP. Functionally, involved in the synthesis of the negatively charged monosaccharide that forms the backbone of pectic cell wall components. This chain is UDP-glucuronate 4-epimerase 4 (GAE4), found in Arabidopsis thaliana (Mouse-ear cress).